Consider the following 525-residue polypeptide: Vanin-like protein 2 (525 aa).

The N-terminal stretch at 1–27 (MAKNYWGFFLFCLALGLMLNLSQQASL) is a signal peptide. N-linked (GlcNAc...) asparagine glycosylation is found at N20 and N61. A CN hydrolase domain is found at 33 to 303 (YTAGVVEFEP…RSIYVARVPK (271 aa)). E72 functions as the Proton acceptor in the catalytic mechanism. N99, N116, and N124 each carry an N-linked (GlcNAc...) asparagine glycan. The active-site Proton donor is the K167. N176 is a glycosylation site (N-linked (GlcNAc...) asparagine). C199 acts as the Nucleophile in catalysis. 3 N-linked (GlcNAc...) asparagine glycosylation sites follow: N333, N348, and N375.

Belongs to the carbon-nitrogen hydrolase superfamily. BTD/VNN family. In terms of tissue distribution, expressed in third instar larvae.

Its subcellular location is the secreted. This is Vanin-like protein 2 from Drosophila melanogaster (Fruit fly).